A 122-amino-acid polypeptide reads, in one-letter code: Large ribosomal subunit protein uL18 (122 aa).

The protein belongs to the universal ribosomal protein uL18 family. In terms of assembly, part of the 50S ribosomal subunit; part of the 5S rRNA/L5/L18/L25 subcomplex. Contacts the 5S and 23S rRNAs.

This is one of the proteins that bind and probably mediate the attachment of the 5S RNA into the large ribosomal subunit, where it forms part of the central protuberance. The polypeptide is Large ribosomal subunit protein uL18 (Leptospira borgpetersenii serovar Hardjo-bovis (strain JB197)).